A 384-amino-acid chain; its full sequence is Galactokinase (384 aa).

Residue 34–37 (EHTD) coordinates substrate. An ATP-binding site is contributed by 123–129 (SSGLSSS). Residues serine 129 and glutamate 161 each coordinate Mg(2+). Aspartate 173 acts as the Proton acceptor in catalysis. Substrate is bound at residue tyrosine 222.

The protein belongs to the GHMP kinase family. GalK subfamily.

The protein localises to the cytoplasm. It carries out the reaction alpha-D-galactose + ATP = alpha-D-galactose 1-phosphate + ADP + H(+). The protein operates within carbohydrate metabolism; galactose metabolism. In terms of biological role, catalyzes the transfer of the gamma-phosphate of ATP to D-galactose to form alpha-D-galactose-1-phosphate (Gal-1-P). The sequence is that of Galactokinase from Haemophilus influenzae (strain PittGG).